We begin with the raw amino-acid sequence, 348 residues long: MASRKEGSGAAGGGFGSAKGKGKAAAAGDSAVKQVQIDGLVVLKIIKHYQEEGQGNEVVQGVLLGLVVDDRLEITNCFPFPQHTEDDADFDEVQYQMEMMRSLRHVNIDHLHVGWYQSTYYGSFVTRALLDSQFSYQHAIEESVVLIYDPIKTAQGSLSLKAYRLTPKLMEVCKEKDFSPEALKKANIAYENMFEEVPIVIKNSYLINVMLWELEKKSAVADRHELLSLASSNHLGKSLQLLMDRVDEMSQDIVKYNTYLRNVSKQQQQKHQYQQRRQQENIQRQSRGEPPLPEEDINKLFKPPQPPPRMESLLIAGQINTYCQNIKEFNAQNLGKLFMAQALQDYNN.

The MPN domain maps to 35 to 169; sequence VQIDGLVVLK…LKAYRLTPKL (135 aa). Residues 267–285 are compositionally biased toward low complexity; it reads QQQKHQYQQRRQQENIQRQ. Positions 267-311 are disordered; it reads QQQKHQYQQRRQQENIQRQSRGEPPLPEEDINKLFKPPQPPPRME.

This sequence belongs to the eIF-3 subunit H family. In terms of assembly, component of the eukaryotic translation initiation factor 3 (eIF-3) complex, which is composed of 13 subunits: EIF3A, EIF3B, EIF3C, EIF3D, EIF3E, EIF3F, EIF3G, EIF3H, EIF3I, EIF3J, EIF3K, EIF3L and EIF3M.

Its subcellular location is the cytoplasm. In terms of biological role, component of the eukaryotic translation initiation factor 3 (eIF-3) complex, which is involved in protein synthesis of a specialized repertoire of mRNAs and, together with other initiation factors, stimulates binding of mRNA and methionyl-tRNAi to the 40S ribosome. The eIF-3 complex specifically targets and initiates translation of a subset of mRNAs involved in cell proliferation. The polypeptide is Eukaryotic translation initiation factor 3 subunit H (Taeniopygia guttata (Zebra finch)).